A 152-amino-acid polypeptide reads, in one-letter code: Large-conductance mechanosensitive channel (152 aa).

The next 3 helical transmembrane spans lie at 21-41 (IDLA…DSLV), 44-64 (VVMP…NKFL), and 92-112 (GNFI…FWMV).

The protein belongs to the MscL family. As to quaternary structure, homopentamer.

The protein resides in the cell inner membrane. Its function is as follows. Channel that opens in response to stretch forces in the membrane lipid bilayer. May participate in the regulation of osmotic pressure changes within the cell. The sequence is that of Large-conductance mechanosensitive channel from Bordetella bronchiseptica (strain ATCC BAA-588 / NCTC 13252 / RB50) (Alcaligenes bronchisepticus).